A 307-amino-acid polypeptide reads, in one-letter code: Heme A synthase (307 aa).

Topologically, residues 1-8 (MQHNRYLK) are cytoplasmic. Residues 9 to 29 (WFAVAATVGMLLILLGGALVT) form a helical membrane-spanning segment. Over 30 to 56 (KTDSGLGCGRNWPDCNGSLIPKEITPE) the chain is Extracellular. A disulfide bond links C37 and C44. A helical membrane pass occupies residues 57-77 (VLIEFSHRLVTGVVSISILVL). Residue E60 is part of the active site. H63 lines the heme o pocket. Over 78 to 92 (TVWTWRKLGHIREVK) the chain is Cytoplasmic. A helical membrane pass occupies residues 93–113 (LLGFLAMFFLIAQALIGAAQV). Over 114-123 (LWGQGDFILA) the chain is Extracellular. A helical membrane pass occupies residues 124–144 (LHFGISLISFAAVLLLSMIVF). H125 lines the heme o pocket. The Cytoplasmic portion of the chain corresponds to 145–161 (EVDRKFDADNVFIGKKL). The chain crosses the membrane as a helical span at residues 162–182 (RWHTIAVTIYSYLVVYTGALV). The Extracellular portion of the chain corresponds to 183-218 (RHTDSSLICPDWPFCYNETPLASPNNMYEWVQMGHR). An intrachain disulfide couples C191 to C197. H217 lines the heme b pocket. The chain crosses the membrane as a helical span at residues 219-239 (LAVLIIFIWIAYITWHAVKEY). Residues 240-247 (KNQRVVYY) lie on the Cytoplasmic side of the membrane. Residues 248-268 (GWIIAFTIVFLQVIAGMLVVL) traverse the membrane as a helical segment. The Extracellular portion of the chain corresponds to 269-276 (TKLNLTVA). The helical transmembrane segment at 277 to 297 (LMHSLLISLLFGLLCYMIMLV) threads the bilayer. H279 is a binding site for heme b. Topologically, residues 298–307 (ARSNYNEKMK) are cytoplasmic.

This sequence belongs to the COX15/CtaA family. Type 1 subfamily. As to quaternary structure, interacts with CtaB. The cofactor is heme b.

The protein resides in the cell membrane. The enzyme catalyses Fe(II)-heme o + 2 A + H2O = Fe(II)-heme a + 2 AH2. It participates in porphyrin-containing compound metabolism; heme A biosynthesis; heme A from heme O: step 1/1. Its function is as follows. Catalyzes the conversion of heme O to heme A by two successive hydroxylations of the methyl group at C8. The first hydroxylation forms heme I, the second hydroxylation results in an unstable dihydroxymethyl group, which spontaneously dehydrates, resulting in the formyl group of heme A. This chain is Heme A synthase, found in Lysinibacillus sphaericus (strain C3-41).